Reading from the N-terminus, the 700-residue chain is MNPIVKSFEYGQHTVTLETGVIARQADAAVLASMGDTTVLVTVVGKKEADAGRDFFPLTVNYQEKTYAAGKIPGGFFKREGRPSEDETLIARLIDRPIRPLFPNGFKNEVQVIITVVSVDPQIEPDIISMIGTSAALAISGIPFSGPLGAARVGYIDGEYVLNPSVAQLATSQLNLVVAGTAGAVLMVESEAQALPEEVMLGSVVYGHDQQQVVIKAIAEFKAEAGKPTWDWTAPTQDADLVAQIKELAEAGLGDAYKIQVKQDRYAQVSVVKAATKEALLASNPSIDLREVDNLLGSLEKKVVRGRIIRGEPRIDGREPDMIRALSVLAGVLPRTHGSALFTRGETQALVTCTLGTERDAQKIDSIMGERTNRFMLHYNFPPYSVGETGMVGSPKRREIGHGKLAWRGINAVMPSAAEFPYSVRVVSEITESNGSSSMASVCGTSLALMDAGVPIKTSVAGIAMGLVKEGDDFVVLSDILGDEDHLGDMDFKVAGTRDGITALQMDIKIEGITKEIMDIALQQAYGARVHILNVMDQAIGSHRDDISDHAPRITVIKINPEKIRDVIGKGGAVIRALTEETGTTIELEDDGTVKIASSNGEATKEAIRRIEEITSEVEVGRIYNGKVIRIVDFGAFVNILPGKDGLVHISQISDERVANVSDHLELNQEVAVKVMEVDRQGRVRLSIKEAQTKEAAAAE.

Mg(2+) contacts are provided by Asp-485 and Asp-491. The KH domain occupies 552 to 611 (PRITVIKINPEKIRDVIGKGGAVIRALTEETGTTIELEDDGTVKIASSNGEATKEAIRRI). In terms of domain architecture, S1 motif spans 621 to 689 (GRIYNGKVIR…RQGRVRLSIK (69 aa)).

Belongs to the polyribonucleotide nucleotidyltransferase family. As to quaternary structure, component of the RNA degradosome, which is a multiprotein complex involved in RNA processing and mRNA degradation. The cofactor is Mg(2+).

It is found in the cytoplasm. The catalysed reaction is RNA(n+1) + phosphate = RNA(n) + a ribonucleoside 5'-diphosphate. In terms of biological role, involved in mRNA degradation. Catalyzes the phosphorolysis of single-stranded polyribonucleotides processively in the 3'- to 5'-direction. The protein is Polyribonucleotide nucleotidyltransferase of Shewanella baltica (strain OS185).